The following is a 168-amino-acid chain: Ribosome maturation factor RimP (168 aa).

Belongs to the RimP family.

The protein localises to the cytoplasm. Functionally, required for maturation of 30S ribosomal subunits. In Bordetella bronchiseptica (strain ATCC BAA-588 / NCTC 13252 / RB50) (Alcaligenes bronchisepticus), this protein is Ribosome maturation factor RimP.